The following is a 23-amino-acid chain: Augerpeptide hhe7a (23 aa).

3 cysteine pairs are disulfide-bonded: Cys3/Cys11, Cys6/Cys19, and Cys10/Cys22.

As to expression, expressed by the venom duct.

It localises to the secreted. Causes abnormal twist followed by immobility when injected into C.elegans. The protein is Augerpeptide hhe7a of Hastula hectica (Sea snail).